Consider the following 229-residue polypeptide: ATP-dependent dethiobiotin synthetase BioD (229 aa).

Residue 12 to 17 coordinates ATP; it reads GVGKTV. A Mg(2+)-binding site is contributed by T16. The active site involves K37. Position 41 (T41) interacts with substrate. Residues D53, 112–115, and 201–203 each bind ATP; these read EGAG and PAG. D53 and E112 together coordinate Mg(2+).

Belongs to the dethiobiotin synthetase family. As to quaternary structure, homodimer. It depends on Mg(2+) as a cofactor.

The protein localises to the cytoplasm. It carries out the reaction (7R,8S)-7,8-diammoniononanoate + CO2 + ATP = (4R,5S)-dethiobiotin + ADP + phosphate + 3 H(+). It participates in cofactor biosynthesis; biotin biosynthesis; biotin from 7,8-diaminononanoate: step 1/2. Functionally, catalyzes a mechanistically unusual reaction, the ATP-dependent insertion of CO2 between the N7 and N8 nitrogen atoms of 7,8-diaminopelargonic acid (DAPA, also called 7,8-diammoniononanoate) to form a ureido ring. The chain is ATP-dependent dethiobiotin synthetase BioD from Mycobacterium sp. (strain JLS).